The sequence spans 357 residues: UDP-3-O-acylglucosamine N-acyltransferase (357 aa).

H258 serves as the catalytic Proton acceptor.

Belongs to the transferase hexapeptide repeat family. LpxD subfamily. In terms of assembly, homotrimer.

It catalyses the reaction a UDP-3-O-[(3R)-3-hydroxyacyl]-alpha-D-glucosamine + a (3R)-hydroxyacyl-[ACP] = a UDP-2-N,3-O-bis[(3R)-3-hydroxyacyl]-alpha-D-glucosamine + holo-[ACP] + H(+). It participates in bacterial outer membrane biogenesis; LPS lipid A biosynthesis. Its function is as follows. Catalyzes the N-acylation of UDP-3-O-acylglucosamine using 3-hydroxyacyl-ACP as the acyl donor. Is involved in the biosynthesis of lipid A, a phosphorylated glycolipid that anchors the lipopolysaccharide to the outer membrane of the cell. This is UDP-3-O-acylglucosamine N-acyltransferase from Azorhizobium caulinodans (strain ATCC 43989 / DSM 5975 / JCM 20966 / LMG 6465 / NBRC 14845 / NCIMB 13405 / ORS 571).